Here is a 429-residue protein sequence, read N- to C-terminus: Glutamyl-tRNA reductase (429 aa).

Residues 49–52, Ser107, 112–114, and Gln118 contribute to the substrate site; these read TCNR and EPQ. Catalysis depends on Cys50, which acts as the Nucleophile. Residue 187–192 participates in NADP(+) binding; it reads GAGKTI.

This sequence belongs to the glutamyl-tRNA reductase family. Homodimer.

It catalyses the reaction (S)-4-amino-5-oxopentanoate + tRNA(Glu) + NADP(+) = L-glutamyl-tRNA(Glu) + NADPH + H(+). Its pathway is porphyrin-containing compound metabolism; protoporphyrin-IX biosynthesis; 5-aminolevulinate from L-glutamyl-tRNA(Glu): step 1/2. Its function is as follows. Catalyzes the NADPH-dependent reduction of glutamyl-tRNA(Glu) to glutamate 1-semialdehyde (GSA). The polypeptide is Glutamyl-tRNA reductase (Marinobacter nauticus (strain ATCC 700491 / DSM 11845 / VT8) (Marinobacter aquaeolei)).